Here is a 250-residue protein sequence, read N- to C-terminus: DNA repair protein RecO (250 aa).

The protein belongs to the RecO family.

Involved in DNA repair and RecF pathway recombination. This chain is DNA repair protein RecO, found in Syntrophomonas wolfei subsp. wolfei (strain DSM 2245B / Goettingen).